Consider the following 905-residue polypeptide: Dopamine D2-like receptor (905 aa).

A disordered region spans residues 1–23; it reads MLSPFDWRRGISSSGTGGTMAAQ. The Extracellular portion of the chain corresponds to 1 to 377; it reads MLSPFDWRRG…GELRVVDHNY (377 aa). N-linked (GlcNAc...) asparagine glycosylation is found at N88, N146, N156, N166, N174, N257, N314, and N343. Residues 378-398 form a helical membrane-spanning segment; the sequence is WALILILFPILTLFGNILVIL. The Cytoplasmic portion of the chain corresponds to 399 to 416; sequence SVCRERSLQTVTNYFIVS. The chain crosses the membrane as a helical span at residues 417 to 437; sequence LAIADLLVAVVVMPFAVYFLV. Over 438-450 the chain is Extracellular; the sequence is NGAWALPDVVCDF. C448 and C525 are disulfide-bonded. Residues 451–471 form a helical membrane-spanning segment; it reads YIAMDVICSTSSIFNLVAISI. Residues 472-493 are Cytoplasmic-facing; that stretch reads DRYIAVTQPIKYAKHKNSRRVC. The chain crosses the membrane as a helical span at residues 494–514; sequence LTILLVWAISAAIGSPIVLGL. Topologically, residues 515 to 531 are extracellular; the sequence is NNTPNREPDVCAFYNAD. Residues 532-552 form a helical membrane-spanning segment; sequence FILYSSLSSFYIPCIIMVFLY. At 553 to 830 the chain is on the cytoplasmic side; sequence WNIFKALRSR…AKKERKATKT (278 aa). Disordered regions lie at residues 600-631, 702-753, and 780-799; these read SRHA…ISPD, ATSA…SVGV, and DSTL…KNSQ. Low complexity predominate over residues 702–722; it reads ATSAAPRSSGSPPDSPLPSGA. Polar residues predominate over residues 723–734; sequence TLQRSSVSSQRR. Positions 735–746 are enriched in basic and acidic residues; the sequence is PTGDDSPKRGEP. A helical membrane pass occupies residues 831 to 851; sequence LAIVLGVFLFCWLPFFSCNIM. Over 852 to 869 the chain is Extracellular; the sequence is DAMCAKFKKDCRPGLTAY. Residues 870–890 form a helical membrane-spanning segment; it reads MMTTWLGYINSFVNPVIYTIF. At 891–905 the chain is on the cytoplasmic side; it reads NPEFRKAFKKIMHMG.

The protein belongs to the G-protein coupled receptor 1 family. As to expression, highest expression is in adult heads.

The protein localises to the cell membrane. Receptor for dopamine. The activity of this receptor is mediated by G proteins which inhibit adenylyl cyclase. In Drosophila melanogaster (Fruit fly), this protein is Dopamine D2-like receptor.